Reading from the N-terminus, the 408-residue chain is Imidazolonepropionase (408 aa).

Positions 73 and 75 each coordinate Fe(3+). H73 and H75 together coordinate Zn(2+). 4-imidazolone-5-propanoate contacts are provided by R82, Y145, and H178. Residue Y145 participates in N-formimidoyl-L-glutamate binding. A Fe(3+)-binding site is contributed by H243. Position 243 (H243) interacts with Zn(2+). Q246 provides a ligand contact to 4-imidazolone-5-propanoate. D318 lines the Fe(3+) pocket. D318 serves as a coordination point for Zn(2+). 2 residues coordinate N-formimidoyl-L-glutamate: N320 and G322. Position 323 (S323) interacts with 4-imidazolone-5-propanoate.

The protein belongs to the metallo-dependent hydrolases superfamily. HutI family. Zn(2+) serves as cofactor. It depends on Fe(3+) as a cofactor.

The protein localises to the cytoplasm. The catalysed reaction is 4-imidazolone-5-propanoate + H2O = N-formimidoyl-L-glutamate. It participates in amino-acid degradation; L-histidine degradation into L-glutamate; N-formimidoyl-L-glutamate from L-histidine: step 3/3. Catalyzes the hydrolytic cleavage of the carbon-nitrogen bond in imidazolone-5-propanoate to yield N-formimidoyl-L-glutamate. It is the third step in the universal histidine degradation pathway. This chain is Imidazolonepropionase, found in Shewanella putrefaciens (strain CN-32 / ATCC BAA-453).